The sequence spans 308 residues: B- and T-lymphocyte attenuator (308 aa).

A signal peptide spans 1-29 (MKTVPAMLVTPRSFREFFILLLGLWSILC). Residues 30–183 (KEPTKRIGEE…ERPGRTWLLY (154 aa)) lie on the Extracellular side of the membrane. Positions 32–134 (PTKRIGEECR…SANLNSEVIN (103 aa)) constitute an Ig-like V-type domain. 3 cysteine pairs are disulfide-bonded: Cys-40-Cys-69, Cys-64-Cys-124, and Cys-78-Cys-85. N-linked (GlcNAc...) asparagine glycosylation is found at Asn-49, Asn-74, Asn-81, Asn-148, and Asn-165. A helical transmembrane segment spans residues 184–204 (ALLPLGTSLLLLACVCLLCFL). Topologically, residues 205–308 (RRIQGKEKKP…TEYASICVRS (104 aa)) are cytoplasmic.

Interacts with tyrosine phosphatases PTPN6/SHP-1 and PTPN11/SHP-2. Interacts with TNFRSF14/HVEM (via cysteine-rich domain 1). Phosphorylated on Tyr residues by TNFRSF14 and by antigen receptors cross-linking, both inducing association with PTPN6 and PTPN11. Post-translationally, N-glycosylated.

It is found in the cell membrane. Its function is as follows. Inhibitory receptor on lymphocytes that negatively regulates antigen receptor signaling via PTPN6/SHP-1 and PTPN11/SHP-2. May interact in cis (on the same cell) or in trans (on other cells) with TNFRSF14. In cis interactions, appears to play an immune regulatory role inhibiting in trans interactions in naive T cells to maintain a resting state. In trans interactions, can predominate during adaptive immune response to provide survival signals to effector T cells. This is B- and T-lymphocyte attenuator from Rattus norvegicus (Rat).